A 150-amino-acid chain; its full sequence is UPF0178 protein PSEEN5341 (150 aa).

This sequence belongs to the UPF0178 family.

This Pseudomonas entomophila (strain L48) protein is UPF0178 protein PSEEN5341.